A 479-amino-acid polypeptide reads, in one-letter code: M-phase inducer phosphatase (479 aa).

The disordered stretch occupies residues 182–218; sequence MTESNTNSTTTPPPKTPETARDCFKRPEPPASANCSP. A compositionally biased stretch (basic and acidic residues) spans 199 to 209; sequence ETARDCFKRPE. The Rhodanese domain occupies 316–432; the sequence is KVASYRIIDC…FFESHVELCE (117 aa). The active site involves Cys379. At Ser455 the chain carries Phosphoserine.

This sequence belongs to the MPI phosphatase family.

It carries out the reaction O-phospho-L-tyrosyl-[protein] + H2O = L-tyrosyl-[protein] + phosphate. In terms of biological role, this protein functions as a dosage-dependent inducer in mitotic control. It is a tyrosine protein phosphatase required for progression of the cell cycle. It may directly dephosphorylate Cdk1 and activate the Cdk1 activity. This is M-phase inducer phosphatase (stg) from Drosophila melanogaster (Fruit fly).